The sequence spans 309 residues: Cytochrome c1, heme protein, mitochondrial (309 aa).

The transit peptide at 1 to 61 (MFSNLSKRWA…LYADSLTAEA (61 aa)) directs the protein to the mitochondrion. The Mitochondrial intermembrane segment spans residues 62–262 (MTAAEHGLHA…TFLNWCAEPE (201 aa)). The region spanning 88–241 (ASIRRGYQVY…DMVEYEDGTP (154 aa)) is the Cytochrome c domain. Residues C101, C104, and H105 each contribute to the heme c site. The span at 131–140 (EFEYDDEPDE) shows a compositional bias: acidic residues. Positions 131-168 (EFEYDDEPDEQGNPKKRPGKLSDYIPGPYPNEQAARAA) are disordered. Position 225 (M225) interacts with heme c. Residues 263–296 (HDERKRLGLKTVIILSSLYLLSIWVKKFKWAGIK) form a helical membrane-spanning segment. The Mitochondrial matrix segment spans residues 297–309 (TRKFVFNPPKPRK).

This sequence belongs to the cytochrome c family. As to quaternary structure, component of the ubiquinol-cytochrome c oxidoreductase (cytochrome b-c1 complex, complex III, CIII), a multisubunit enzyme composed of 10 subunits. The complex is composed of 3 respiratory subunits cytochrome b (COB), cytochrome c1 (CYT1) and Rieske protein (RIP1), 2 core protein subunits COR1 and QCR2, and 5 low-molecular weight protein subunits QCR6, QCR7, QCR8, QCR9 and QCR10. The complex exists as an obligatory dimer and forms supercomplexes (SCs) in the inner mitochondrial membrane with a monomer or a dimer of cytochrome c oxidase (complex IV, CIV), resulting in 2 different assemblies (supercomplexes III(2)IV and III(2)IV(2)). CYT1 interacts with COX5A at the CIII-CIV interface. It depends on heme c as a cofactor.

It localises to the mitochondrion inner membrane. It carries out the reaction a quinol + 2 Fe(III)-[cytochrome c](out) = a quinone + 2 Fe(II)-[cytochrome c](out) + 2 H(+)(out). Functionally, component of the ubiquinol-cytochrome c oxidoreductase, a multisubunit transmembrane complex that is part of the mitochondrial electron transport chain which drives oxidative phosphorylation. The respiratory chain contains 3 multisubunit complexes succinate dehydrogenase (complex II, CII), ubiquinol-cytochrome c oxidoreductase (cytochrome b-c1 complex, complex III, CIII) and cytochrome c oxidase (complex IV, CIV), that cooperate to transfer electrons derived from NADH and succinate to molecular oxygen, creating an electrochemical gradient over the inner membrane that drives transmembrane transport and the ATP synthase. The cytochrome b-c1 complex catalyzes electron transfer from ubiquinol to cytochrome c, linking this redox reaction to translocation of protons across the mitochondrial inner membrane, with protons being carried across the membrane as hydrogens on the quinol. In the process called Q cycle, 2 protons are consumed from the matrix, 4 protons are released into the intermembrane space and 2 electrons are passed to cytochrome c. Cytochrome c1 is a catalytic core subunit containing a c-type heme. It transfers electrons from the [2Fe-2S] iron-sulfur cluster of the Rieske protein to cytochrome c. The protein is Cytochrome c1, heme protein, mitochondrial (CYT1) of Saccharomyces cerevisiae (strain ATCC 204508 / S288c) (Baker's yeast).